The sequence spans 49 residues: Large ribosomal subunit protein bL36 (49 aa).

This sequence belongs to the bacterial ribosomal protein bL36 family.

The sequence is that of Large ribosomal subunit protein bL36 from Delftia acidovorans (strain DSM 14801 / SPH-1).